Here is a 100-residue protein sequence, read N- to C-terminus: NADH-quinone oxidoreductase subunit K 2 (100 aa).

Helical transmembrane passes span 4-24 (LHSY…GVLI), 29-49 (IVIF…FIAL), and 60-80 (IFVF…LALM).

This sequence belongs to the complex I subunit 4L family. As to quaternary structure, NDH-1 is composed of 14 different subunits. Subunits NuoA, H, J, K, L, M, N constitute the membrane sector of the complex.

It is found in the cell inner membrane. The catalysed reaction is a quinone + NADH + 5 H(+)(in) = a quinol + NAD(+) + 4 H(+)(out). Functionally, NDH-1 shuttles electrons from NADH, via FMN and iron-sulfur (Fe-S) centers, to quinones in the respiratory chain. The immediate electron acceptor for the enzyme in this species is believed to be ubiquinone. Couples the redox reaction to proton translocation (for every two electrons transferred, four hydrogen ions are translocated across the cytoplasmic membrane), and thus conserves the redox energy in a proton gradient. This is NADH-quinone oxidoreductase subunit K 2 from Geobacter metallireducens (strain ATCC 53774 / DSM 7210 / GS-15).